Here is a 278-residue protein sequence, read N- to C-terminus: MAVAYADKPNHFINFPLTQFEGFVLNYKGLQFQLLDEGVDCKIQTAPHISLAMLDIQPEDYRSVDVAIQEVIDDMHWGEGFQIKFDNPHILGRCIVLDVKGVEELHDDLVNYIRDKGCVADQSRKWIGHCTIAQLTNAALSIKENVDFINSMQFNYKITINPSSPARLEIVKLGAEKKDGFYETIVSHWMGIRFEYNPPTDKLAMIMGYCCLEVVRKELEEGDLPENDDDAWFKLSYHYENNSWFFRHVYRKSFYFRKSCQNLDCNCLGFYESSVEED.

It belongs to the coronaviruses ns2a protein family.

In Bovine coronavirus (strain LY-138) (BCoV), this protein is Non-structural protein 2a.